Here is a 552-residue protein sequence, read N- to C-terminus: FERRY endosomal RAB5 effector complex subunit 3 (552 aa).

Phosphoserine is present on S79.

Component of the FERRY complex composed of five subunits, TBCK, PPP1R21, FERRY3, CRYZL1 and GATD1 with a ratio of 1:2:1:2:4, respectively.

The protein localises to the cytoplasm. It is found in the early endosome. Component of the FERRY complex (Five-subunit Endosomal Rab5 and RNA/ribosome intermediary). The FERRY complex directly interacts with mRNAs and RAB5A, and functions as a RAB5A effector involved in the localization and the distribution of specific mRNAs most likely by mediating their endosomal transport. The complex recruits mRNAs and ribosomes to early endosomes through direct mRNA-interaction. Plays a role in mast cell degranulation. The polypeptide is FERRY endosomal RAB5 effector complex subunit 3 (Rattus norvegicus (Rat)).